The chain runs to 230 residues: PKHD-type hydroxylase Xfasm12_1709 (230 aa).

A Fe2OG dioxygenase domain is found at 78–182 (RTLPPRFNRY…RIASFFWVQS (105 aa)). Positions 96, 98, and 163 each coordinate Fe cation. A 2-oxoglutarate-binding site is contributed by R173.

Fe(2+) is required as a cofactor. L-ascorbate serves as cofactor.

The chain is PKHD-type hydroxylase Xfasm12_1709 from Xylella fastidiosa (strain M12).